A 339-amino-acid polypeptide reads, in one-letter code: DNA-directed RNA polymerase subunit alpha (339 aa).

Positions 1–233 are alpha N-terminal domain (alpha-NTD); it reads MVREEVAGST…DLFLPFLHAE (233 aa). The segment at 264-339 is alpha C-terminal domain (alpha-CTD); it reads KKGIPLNCIF…IDLLKNKLSF (76 aa).

This sequence belongs to the RNA polymerase alpha chain family. In plastids the minimal PEP RNA polymerase catalytic core is composed of four subunits: alpha, beta, beta', and beta''. When a (nuclear-encoded) sigma factor is associated with the core the holoenzyme is formed, which can initiate transcription.

The protein localises to the plastid. Its subcellular location is the chloroplast. It carries out the reaction RNA(n) + a ribonucleoside 5'-triphosphate = RNA(n+1) + diphosphate. Its function is as follows. DNA-dependent RNA polymerase catalyzes the transcription of DNA into RNA using the four ribonucleoside triphosphates as substrates. The protein is DNA-directed RNA polymerase subunit alpha of Crithopsis delileana.